The chain runs to 315 residues: Deoxyribonuclease-1-like 1 (315 aa).

Residues 1–29 form the signal peptide; the sequence is MDSSGGFQKHTCGHALLLLLLLLAGGAEA. Catalysis depends on residues Glu-108 and His-159. Cys-198 and Cys-235 are joined by a disulfide. Asn-272 carries an N-linked (GlcNAc...) asparagine glycan.

Belongs to the DNase I family.

The protein localises to the endoplasmic reticulum. This Sus scrofa (Pig) protein is Deoxyribonuclease-1-like 1 (DNASE1L1).